The following is a 451-amino-acid chain: UDP-N-acetylmuramoylalanine--D-glutamate ligase (451 aa).

119–125 (GSNGKTT) contacts ATP.

This sequence belongs to the MurCDEF family.

The protein resides in the cytoplasm. The enzyme catalyses UDP-N-acetyl-alpha-D-muramoyl-L-alanine + D-glutamate + ATP = UDP-N-acetyl-alpha-D-muramoyl-L-alanyl-D-glutamate + ADP + phosphate + H(+). Its pathway is cell wall biogenesis; peptidoglycan biosynthesis. In terms of biological role, cell wall formation. Catalyzes the addition of glutamate to the nucleotide precursor UDP-N-acetylmuramoyl-L-alanine (UMA). This is UDP-N-acetylmuramoylalanine--D-glutamate ligase from Streptococcus mutans serotype c (strain ATCC 700610 / UA159).